Here is a 567-residue protein sequence, read N- to C-terminus: Arginine--tRNA ligase (567 aa).

Residues 128–138 (ANPTGPLHVGH) carry the 'HIGH' region motif.

This sequence belongs to the class-I aminoacyl-tRNA synthetase family. In terms of assembly, monomer.

Its subcellular location is the cytoplasm. The enzyme catalyses tRNA(Arg) + L-arginine + ATP = L-arginyl-tRNA(Arg) + AMP + diphosphate. This chain is Arginine--tRNA ligase, found in Acidovorax ebreus (strain TPSY) (Diaphorobacter sp. (strain TPSY)).